Consider the following 275-residue polypeptide: Undecaprenyl-diphosphatase (275 aa).

A run of 8 helical transmembrane segments spans residues 2–22, 43–63, 83–103, 111–131, 147–167, 186–206, 221–241, and 255–275; these read LDIF…FLPI, FTDM…VVLY, WVLW…GLPL, LMNW…FIVI, TLPY…LIPG, YVAT…ASLL, LQGA…YLSI, and AFGW…TLIH.

Belongs to the UppP family.

The protein localises to the cell membrane. It catalyses the reaction di-trans,octa-cis-undecaprenyl diphosphate + H2O = di-trans,octa-cis-undecaprenyl phosphate + phosphate + H(+). Catalyzes the dephosphorylation of undecaprenyl diphosphate (UPP). Confers resistance to bacitracin. In Lactiplantibacillus plantarum (strain ATCC BAA-793 / NCIMB 8826 / WCFS1) (Lactobacillus plantarum), this protein is Undecaprenyl-diphosphatase.